The following is a 627-amino-acid chain: Muscarinic acetylcholine receptor gar-2 (627 aa).

At 1–9 the chain is on the extracellular side; that stretch reads MAVASVLLA. A helical membrane pass occupies residues 10–30; that stretch reads LFMLFLSIVTVIGNLAVLLSY. Residues 31–41 lie on the Cytoplasmic side of the membrane; it reads YLDKNIRQPTN. Residues 42–62 form a helical membrane-spanning segment; it reads YFIFSLAISDLLIGLEGIPVY. Residues 63-81 are Extracellular-facing; the sequence is TAFYLNNNEWIWGDVLCDL. C79 and C160 are disulfide-bonded. The chain crosses the membrane as a helical span at residues 82 to 102; sequence WLSIDYIVCLASIYTVLGITV. At 103–122 the chain is on the cytoplasmic side; it reads DRYYSVKKPATYRNWRTPGR. A helical transmembrane segment spans residues 123 to 143; sequence VVLIIIFIWLVPSILFSVSIF. The Extracellular segment spans residues 144-172; the sequence is GYGTFTGTGRILKETECYVQFMTNPYLNM. A helical transmembrane segment spans residues 173–193; that stretch reads GMYISYYWTTLFVMLYLYWGI. Residues 194 to 549 lie on the Cytoplasmic side of the membrane; the sequence is YRAAKKLALK…ENRARKALRT (356 aa). Disordered regions lie at residues 222–266, 423–442, and 449–475; these read VSVR…VGTP, REDE…ENGG, and ANDE…HDPN. Over residues 231–264 the composition is skewed to low complexity; that stretch reads NSSSDSPNDTSNSSKCFRTAPPTTTVQTTQTNVG. The segment covering 459 to 475 has biased composition (basic and acidic residues); that stretch reads KESEQKEEMTPENHDPN. The chain crosses the membrane as a helical span at residues 550-570; the sequence is ITFILGSFIILWTPFYVLATI. At 571–586 the chain is on the extracellular side; sequence YGFCETCKASPSFNTL. A helical transmembrane segment spans residues 587–609; it reads YTISYYLCYMNSPLNPFCYAMAN. Topologically, residues 610 to 627 are cytoplasmic; that stretch reads QQFKKTLTRIFKGDFRRV.

Belongs to the G-protein coupled receptor 1 family. Muscarinic acetylcholine receptor subfamily. Expressed in putative sensory neurons, many cells of the ventral cord and in the HSN motor neurons. Expressed in some cholinergic motor neurons and GABAergic motor neurons, which are the two major types of ventral cord motor neurons.

It localises to the cell membrane. The protein resides in the cell projection. The protein localises to the axon. Its function is as follows. The muscarinic acetylcholine receptor mediates various cellular responses, including inhibition of adenylate cyclase, breakdown of phosphoinositides and modulation of potassium channels through the action of G proteins. Primary transducing effect is Pi turnover. Regulates the activity of ventral cord motor neurons. Couples to the G(o)-alpha G-protein subunit goa-1 to negatively regulate cholinergic receptor activity in the presence of high levels of the neurotransmitter acetylcholine in ventral cord motor neurons. As acetylcholine depolarizes body wall muscles, modulation of acetylcholine levels most likely results in the control locomotory behavior and egg-laying. The protein is Muscarinic acetylcholine receptor gar-2 of Caenorhabditis elegans.